A 343-amino-acid polypeptide reads, in one-letter code: Protein RecA (343 aa).

64 to 71 (GPESSGKT) is a binding site for ATP.

Belongs to the RecA family.

Its subcellular location is the cytoplasm. Functionally, can catalyze the hydrolysis of ATP in the presence of single-stranded DNA, the ATP-dependent uptake of single-stranded DNA by duplex DNA, and the ATP-dependent hybridization of homologous single-stranded DNAs. It interacts with LexA causing its activation and leading to its autocatalytic cleavage. The chain is Protein RecA from Bacillus cereus (strain ATCC 10987 / NRS 248).